The sequence spans 421 residues: Testin (421 aa).

Residues 92–199 (MILTNPVAAK…GDVKLPCEMD (108 aa)) form the PET domain. The tract at residues 133-164 (EKQPVAGSEGAQYRKKQLAKQLPAHDQDPSKC) is disordered. Over residues 155 to 164 (PAHDQDPSKC) the composition is skewed to basic and acidic residues. 3 consecutive LIM zinc-binding domains span residues 234–297 (YSCY…CDSE), 299–359 (PRCA…NHAV), and 362–421 (QGCH…KMMS).

This sequence belongs to the prickle / espinas / testin family. As to quaternary structure, interacts via LIM domain 1 with ZYX. Interacts (via LIM domain 3) with ENAH and VASP. Interacts with ALKBH4, talin, actin, alpha-actinin, GRIP1 and PXN. Interacts (via LIM domain 2) with ACTL7A (via N-terminus). Heterodimer with ACTL7A; the heterodimer interacts with ENAH to form a heterotrimer.

Its subcellular location is the cytoplasm. The protein localises to the cell junction. It is found in the focal adhesion. Functionally, scaffold protein that may play a role in cell adhesion, cell spreading and in the reorganization of the actin cytoskeleton. Plays a role in the regulation of cell proliferation. May act as a tumor suppressor. This chain is Testin (TES), found in Papio anubis (Olive baboon).